We begin with the raw amino-acid sequence, 267 residues long: FCS-Like Zinc finger 8 (267 aa).

Disordered regions lie at residues 1–29 (MLKK…KTTP) and 124–156 (DSPI…GSPR). 2 stretches are compositionally biased toward polar residues: residues 15 to 28 (ETNQ…SKTT) and 126 to 141 (PISS…NSQP). An FLZ-type zinc finger spans residues 221–265 (SFLSCCCNCKKSLGPRDDIFMYRGDRAFCSSECRSIEMMMSEEND).

Belongs to the FLZ family. As to quaternary structure, interacts with KIN10 and KIN11 via its FLZ-type zinc finger domain. Interacts with KINB1, KINB2, KINB3 and SNF4 via its N-terminal part. Interacts with HB21/ZHD3.

Its function is as follows. May act as an adapter to facilitate the interaction of SnRK1 complex with effector proteins, conferring tissue- and stimulus-type specific differences in the SnRK1 regulation pathway. The protein is FCS-Like Zinc finger 8 of Arabidopsis thaliana (Mouse-ear cress).